A 199-amino-acid polypeptide reads, in one-letter code: ATP synthase subunit b (199 aa).

The helical transmembrane segment at 5–25 (SFVTTLSVCVMILGLAALGFA) threads the bilayer.

The protein belongs to the ATPase B chain family. As to quaternary structure, F-type ATPases have 2 components, F(1) - the catalytic core - and F(0) - the membrane proton channel. F(1) has five subunits: alpha(3), beta(3), gamma(1), delta(1), epsilon(1). F(0) has three main subunits: a(1), b(2) and c(10-14). The alpha and beta chains form an alternating ring which encloses part of the gamma chain. F(1) is attached to F(0) by a central stalk formed by the gamma and epsilon chains, while a peripheral stalk is formed by the delta and b chains.

It is found in the cell inner membrane. F(1)F(0) ATP synthase produces ATP from ADP in the presence of a proton or sodium gradient. F-type ATPases consist of two structural domains, F(1) containing the extramembraneous catalytic core and F(0) containing the membrane proton channel, linked together by a central stalk and a peripheral stalk. During catalysis, ATP synthesis in the catalytic domain of F(1) is coupled via a rotary mechanism of the central stalk subunits to proton translocation. In terms of biological role, component of the F(0) channel, it forms part of the peripheral stalk, linking F(1) to F(0). The protein is ATP synthase subunit b of Citrifermentans bemidjiense (strain ATCC BAA-1014 / DSM 16622 / JCM 12645 / Bem) (Geobacter bemidjiensis).